The sequence spans 391 residues: MSEQTANKETRGFQSEVKQLLHLMIHSLYSNKEIFLRELISNASDASDKLRFKALSNGDLYEGNADLGVKLSFNEAANTLTISDNGIGMSREDVIEHLGTIAKSGTADFFSKLSEDQSKDSQLIGQFGVGFYSAFIVADAVTVRTRAAGSEKDQGVQWHSEGEGDYTIEDITKESRGTDIILHMREEGKEFLNEWRLKEVIGKYSDHIGIPVSIWAVEKDEEGKDKEGKWEQVNKAQALWTRSKSDIEDAEYQEFYKHVSHDFADPLTWSHNKVEGKNDYTSLLYIPAKAPFDMMNRDHKSGLKLYVQRVFIMDDAEQFMPTYLRFVKGLIDSNDLPLNVSREILQDNKVTQSLRSACTKRVLGMLEKMAKKDDEKYLTFWKQFGQVLKEG.

The protein belongs to the heat shock protein 90 family. In terms of assembly, homodimer.

The protein resides in the cytoplasm. Functionally, molecular chaperone. Has ATPase activity. The polypeptide is Chaperone protein HtpG (htpG) (Aliivibrio fischeri (Vibrio fischeri)).